Reading from the N-terminus, the 61-residue chain is Small ribosomal subunit protein uS14 (61 aa).

Residues Cys24, Cys27, Cys40, and Cys43 each coordinate Zn(2+).

This sequence belongs to the universal ribosomal protein uS14 family. Zinc-binding uS14 subfamily. In terms of assembly, part of the 30S ribosomal subunit. Contacts proteins S3 and S10. Zn(2+) is required as a cofactor.

Binds 16S rRNA, required for the assembly of 30S particles and may also be responsible for determining the conformation of the 16S rRNA at the A site. This is Small ribosomal subunit protein uS14 from Campylobacter concisus (strain 13826).